The following is an 836-amino-acid chain: Conserved oligomeric Golgi complex subunit 7 (836 aa).

2 coiled-coil regions span residues 29 to 49 (QDSL…ASEE) and 107 to 127 (LARV…LQDA). Positions 246–265 (KLANERSESQRLSSGDEFQS) are disordered.

The protein belongs to the COG7 family. In terms of assembly, component of the conserved oligomeric Golgi complex which is composed of eight different subunits and is required for normal Golgi morphology and localization. Interacts with COG5 and COG6.

It localises to the golgi apparatus membrane. Functionally, required for normal Golgi function. Necessary for embryo development and pigmentation, especially for the expansion of cells and organs, and for the formation of the organized shoot apical meristem (SAM). Probably involved in the generation of the extra-cellular matrix. The polypeptide is Conserved oligomeric Golgi complex subunit 7 (Arabidopsis thaliana (Mouse-ear cress)).